A 293-amino-acid chain; its full sequence is Undecaprenyl-diphosphatase (293 aa).

Helical transmembrane passes span 3 to 23 (IALALKAVILGIVEGLTEFLP), 43 to 63 (KGKIFEIVIQFGAILAVCWEF), 85 to 105 (ANVVIASVPAIVLAFIFGKWI), 109 to 129 (LFNPISVALAFIVGGVVILLA), 178 to 198 (FALVPGTSRSGATIIGGMLFG), 203 to 223 (VATEFSFFLAIPVIFGATVYE), 238 to 258 (IFAVGFVFAFLSAFLCVRWLL), and 269 to 289 (FAWYRIAFGIVVLLTAYSGLV).

The protein belongs to the UppP family.

It localises to the cell inner membrane. It carries out the reaction di-trans,octa-cis-undecaprenyl diphosphate + H2O = di-trans,octa-cis-undecaprenyl phosphate + phosphate + H(+). Functionally, catalyzes the dephosphorylation of undecaprenyl diphosphate (UPP). Confers resistance to bacitracin. This chain is Undecaprenyl-diphosphatase, found in Cupriavidus necator (strain ATCC 17699 / DSM 428 / KCTC 22496 / NCIMB 10442 / H16 / Stanier 337) (Ralstonia eutropha).